The sequence spans 1067 residues: Carbamoyl phosphate synthase large chain (1067 aa).

Residues Met1 to Glu401 are carboxyphosphate synthetic domain. Arg129, Arg169, Gly175, Gly176, Lys208, Val210, Glu215, Gly241, Ile242, His243, Gln284, and Glu298 together coordinate ATP. The 195-residue stretch at Arg133–Leu327 folds into the ATP-grasp 1 domain. 3 residues coordinate Mg(2+): Gln284, Glu298, and Asn300. 3 residues coordinate Mn(2+): Gln284, Glu298, and Asn300. Positions Ile402–Val549 are oligomerization domain. Positions Val550–Ser932 are carbamoyl phosphate synthetic domain. In terms of domain architecture, ATP-grasp 2 spans Asp674 to Leu864. ATP-binding residues include Arg710, Lys749, Leu751, Glu755, Gly780, Val781, His782, Ser783, Gln823, and Glu835. Residues Gln823, Glu835, and Asn837 each coordinate Mg(2+). The Mn(2+) site is built by Gln823, Glu835, and Asn837. The 135-residue stretch at Met933–Ile1067 folds into the MGS-like domain. An allosteric domain region spans residues Met933–Ile1067.

It belongs to the CarB family. As to quaternary structure, composed of two chains; the small (or glutamine) chain promotes the hydrolysis of glutamine to ammonia, which is used by the large (or ammonia) chain to synthesize carbamoyl phosphate. Tetramer of heterodimers (alpha,beta)4. Mg(2+) serves as cofactor. The cofactor is Mn(2+).

The catalysed reaction is hydrogencarbonate + L-glutamine + 2 ATP + H2O = carbamoyl phosphate + L-glutamate + 2 ADP + phosphate + 2 H(+). The enzyme catalyses hydrogencarbonate + NH4(+) + 2 ATP = carbamoyl phosphate + 2 ADP + phosphate + 2 H(+). It participates in amino-acid biosynthesis; L-arginine biosynthesis; carbamoyl phosphate from bicarbonate: step 1/1. The protein operates within pyrimidine metabolism; UMP biosynthesis via de novo pathway; (S)-dihydroorotate from bicarbonate: step 1/3. Large subunit of the glutamine-dependent carbamoyl phosphate synthetase (CPSase). CPSase catalyzes the formation of carbamoyl phosphate from the ammonia moiety of glutamine, carbonate, and phosphate donated by ATP, constituting the first step of 2 biosynthetic pathways, one leading to arginine and/or urea and the other to pyrimidine nucleotides. The large subunit (synthetase) binds the substrates ammonia (free or transferred from glutamine from the small subunit), hydrogencarbonate and ATP and carries out an ATP-coupled ligase reaction, activating hydrogencarbonate by forming carboxy phosphate which reacts with ammonia to form carbamoyl phosphate. The chain is Carbamoyl phosphate synthase large chain from Clostridium perfringens (strain 13 / Type A).